The primary structure comprises 74 residues: ATP synthase subunit c (74 aa).

2 helical membrane passes run 8 to 28 (FIGV…VSNI) and 52 to 72 (IGAG…MLLI).

This sequence belongs to the ATPase C chain family. As to quaternary structure, F-type ATPases have 2 components, F(1) - the catalytic core - and F(0) - the membrane proton channel. F(1) has five subunits: alpha(3), beta(3), gamma(1), delta(1), epsilon(1). F(0) has three main subunits: a(1), b(2) and c(10-14). The alpha and beta chains form an alternating ring which encloses part of the gamma chain. F(1) is attached to F(0) by a central stalk formed by the gamma and epsilon chains, while a peripheral stalk is formed by the delta and b chains.

The protein resides in the cell inner membrane. F(1)F(0) ATP synthase produces ATP from ADP in the presence of a proton or sodium gradient. F-type ATPases consist of two structural domains, F(1) containing the extramembraneous catalytic core and F(0) containing the membrane proton channel, linked together by a central stalk and a peripheral stalk. During catalysis, ATP synthesis in the catalytic domain of F(1) is coupled via a rotary mechanism of the central stalk subunits to proton translocation. In terms of biological role, key component of the F(0) channel; it plays a direct role in translocation across the membrane. A homomeric c-ring of between 10-14 subunits forms the central stalk rotor element with the F(1) delta and epsilon subunits. This Rickettsia canadensis (strain McKiel) protein is ATP synthase subunit c.